The sequence spans 743 residues: Apo-petrobactin exporter (743 aa).

12 helical membrane-spanning segments follow: residues 20 to 40, 199 to 219, 223 to 243, 258 to 278, 303 to 323, 337 to 357, 406 to 426, 561 to 581, 584 to 604, 613 to 633, 672 to 692, and 694 to 714; these read WITL…LPQV, ADVK…ILLY, ILAI…SPTL, AISI…LFLI, GGAI…LLLA, VAVF…LLIF, WTII…VPRI, DEAV…LVYL, IVAM…ALGA, MGAP…LVAL, AGLI…QVLV, and FGIV…PLLV.

Belongs to the resistance-nodulation-cell division (RND) (TC 2.A.6) family. MmpL subfamily.

The protein resides in the cell membrane. In terms of biological role, exports the siderophore petrobactin. The sequence is that of Apo-petrobactin exporter from Bacillus anthracis.